A 268-amino-acid polypeptide reads, in one-letter code: Myb-related protein 315 (268 aa).

HTH myb-type domains follow at residues 9–61 (KFGL…MNYL) and 62–116 (RPDL…KKKL). 2 DNA-binding regions (H-T-H motif) span residues 37-61 (WRVIPKLAGLSRCGKSCRLRWMNYL) and 89-112 (WSKIALHIPGRTDNEIKNYWNTHI).

As to expression, expressed in roots, stems, leaves, seed pods and flowers. Strongest expression in the stem.

The protein resides in the nucleus. Its function is as follows. Transcription factor. The chain is Myb-related protein 315 from Antirrhinum majus (Garden snapdragon).